We begin with the raw amino-acid sequence, 145 residues long: 3-hydroxyacyl-[acyl-carrier-protein] dehydratase FabZ (145 aa).

His-47 is an active-site residue.

The protein belongs to the thioester dehydratase family. FabZ subfamily.

Its subcellular location is the cytoplasm. It carries out the reaction a (3R)-hydroxyacyl-[ACP] = a (2E)-enoyl-[ACP] + H2O. Functionally, involved in unsaturated fatty acids biosynthesis. Catalyzes the dehydration of short chain beta-hydroxyacyl-ACPs and long chain saturated and unsaturated beta-hydroxyacyl-ACPs. This Polaromonas sp. (strain JS666 / ATCC BAA-500) protein is 3-hydroxyacyl-[acyl-carrier-protein] dehydratase FabZ.